Reading from the N-terminus, the 301-residue chain is 4-diphosphocytidyl-2-C-methyl-D-erythritol kinase (301 aa).

The active site involves Lys18. 103–113 (PVAAGIGGGSA) is a binding site for ATP. Asp145 is an active-site residue.

It belongs to the GHMP kinase family. IspE subfamily.

It catalyses the reaction 4-CDP-2-C-methyl-D-erythritol + ATP = 4-CDP-2-C-methyl-D-erythritol 2-phosphate + ADP + H(+). The protein operates within isoprenoid biosynthesis; isopentenyl diphosphate biosynthesis via DXP pathway; isopentenyl diphosphate from 1-deoxy-D-xylulose 5-phosphate: step 3/6. In terms of biological role, catalyzes the phosphorylation of the position 2 hydroxy group of 4-diphosphocytidyl-2C-methyl-D-erythritol. The polypeptide is 4-diphosphocytidyl-2-C-methyl-D-erythritol kinase (Bradyrhizobium sp. (strain BTAi1 / ATCC BAA-1182)).